Here is a 245-residue protein sequence, read N- to C-terminus: Pyridoxine 5'-phosphate synthase (245 aa).

3-amino-2-oxopropyl phosphate is bound by residues asparagine 8 and arginine 19. Histidine 44 (proton acceptor) is an active-site residue. Residues arginine 46 and histidine 51 each coordinate 1-deoxy-D-xylulose 5-phosphate. Glutamate 76 functions as the Proton acceptor in the catalytic mechanism. Residue threonine 106 coordinates 1-deoxy-D-xylulose 5-phosphate. Residue histidine 198 is the Proton donor of the active site. Residues aspartate 199 and 221–222 (GH) contribute to the 3-amino-2-oxopropyl phosphate site.

It belongs to the PNP synthase family. As to quaternary structure, homooctamer; tetramer of dimers.

The protein localises to the cytoplasm. The catalysed reaction is 3-amino-2-oxopropyl phosphate + 1-deoxy-D-xylulose 5-phosphate = pyridoxine 5'-phosphate + phosphate + 2 H2O + H(+). It functions in the pathway cofactor biosynthesis; pyridoxine 5'-phosphate biosynthesis; pyridoxine 5'-phosphate from D-erythrose 4-phosphate: step 5/5. Functionally, catalyzes the complicated ring closure reaction between the two acyclic compounds 1-deoxy-D-xylulose-5-phosphate (DXP) and 3-amino-2-oxopropyl phosphate (1-amino-acetone-3-phosphate or AAP) to form pyridoxine 5'-phosphate (PNP) and inorganic phosphate. This is Pyridoxine 5'-phosphate synthase from Brucella anthropi (strain ATCC 49188 / DSM 6882 / CCUG 24695 / JCM 21032 / LMG 3331 / NBRC 15819 / NCTC 12168 / Alc 37) (Ochrobactrum anthropi).